The primary structure comprises 273 residues: Arginine and glutamate-rich protein 1 (273 aa).

2 stretches are compositionally biased toward basic residues: residues 1–29 and 37–58; these read MGRS…RSRS and VRKR…RSRS. The interval 1-74 is necessary and sufficient for RNA binding; the sequence is MGRSRSRSSS…VSRRERDRER (74 aa). The tract at residues 1–113 is disordered; that stretch reads MGRSRSRSSS…EEKKAEFERQ (113 aa). Phosphoserine is present on residues Ser-58 and Ser-60. Thr-61 carries the post-translational modification Phosphothreonine. 2 stretches are compositionally biased toward basic and acidic residues: residues 66 to 84 and 93 to 113; these read SRRE…RIDI and SSLD…FERQ. Positions 75-273 are necessary and sufficient for transcriptional regulation; that stretch reads ASSPPDRIDI…KLSFSLKTQD (199 aa). Residues Ser-76 and Ser-77 each carry the phosphoserine modification. The LXXLL motif 1; degenerate motif lies at 172 to 176; that stretch reads LLEEL. The LXXLL motif 2; degenerate signature appears at 201–205; it reads LERIL. Positions 238–253 are enriched in basic and acidic residues; that stretch reads MKLEQERQRQQKEEQK. Residues 238 to 273 are disordered; it reads MKLEQERQRQQKEEQKIILGKGKSRPKLSFSLKTQD. The residue at position 266 (Ser-266) is a Phosphoserine.

The protein belongs to the ARGLU1 family. Interacts with MED1; the interaction is direct. Interacts with PUF60, U2AF2 and JMJD6; may interact with other proteins involved in RNA processing and splicing.

The protein localises to the nucleus. The protein resides in the nucleus speckle. Its subcellular location is the chromosome. Functionally, dual function regulator of gene expression; regulator of transcription and modulator of alternative splicing. General coactivator of nuclear receptor-induced gene expression, including genes activated by the glucocorticoid receptor NR3C1. Binds to a subset of pre-mRNAs and to components of the spliceosome machinery to directly modulate basal alternative splicing; involved in simple and complex cassette exon splicing events. Binds its own pre-mRNA and regulates its alternative splicing and degradation; one of the alternatively spliced products is a stable intronic sequence RNA (sisRNA) that binds the protein to regulate its ability to affect splicing. Binding of the sisRNA stimulates phase separation and localization to nuclear speckles, which may contribute to activation of nuclear receptor-induced gene expression. May also indirectly modulate alternative splicing. Regulates transcription of genes involved in heart development, neuronal cell function, protein localization and chromatin localization. Regulates splicing of genes involved in neurogenesis and chromatin organization. Essential for central nervous system development. Required for the estrogen-dependent expression of ESR1 target genes. Can act in cooperation with MED1. In Bos taurus (Bovine), this protein is Arginine and glutamate-rich protein 1 (ARGLU1).